The sequence spans 463 residues: Dipeptidyl peptidase 1 (463 aa).

A signal peptide spans 1–24 (MGVGPASLLAALLLLLSGDRAVRC). N29, N53, and N119 each carry an N-linked (GlcNAc...) asparagine glycan. Intrachain disulfides connect C30–C118, C54–C136, C255–C298, C291–C331, and C321–C337. Residues 135-230 (ACFTGKKVGT…TAEIQQKILH (96 aa)) constitute a propeptide that is removed on maturation. The active site involves C258. Residue N276 is glycosylated (N-linked (GlcNAc...) asparagine). F302 and Y304 together coordinate chloride. Y347 contacts chloride. Catalysis depends on residues H405 and N427.

Belongs to the peptidase C1 family. Tetramer of heterotrimers consisting of exclusion domain, heavy- and light chains. Chloride is required as a cofactor.

The protein resides in the lysosome. It carries out the reaction Release of an N-terminal dipeptide, Xaa-Yaa-|-Zaa-, except when Xaa is Arg or Lys, or Yaa or Zaa is Pro.. In terms of biological role, thiol protease. Has dipeptidylpeptidase activity. Active against a broad range of dipeptide substrates composed of both polar and hydrophobic amino acids. Proline cannot occupy the P1 position and arginine cannot occupy the P2 position of the substrate. Can act as both an exopeptidase and endopeptidase. Activates serine proteases such as elastase, cathepsin G and granzymes A and B. This chain is Dipeptidyl peptidase 1 (CTSC), found in Macaca fascicularis (Crab-eating macaque).